The sequence spans 431 residues: Glucose-1-phosphate adenylyltransferase (431 aa).

K39 serves as a coordination point for beta-D-fructose 1,6-bisphosphate. AMP contacts are provided by R40, H46, and R52. Y114 provides a ligand contact to alpha-D-glucose 1-phosphate. R130 provides a ligand contact to AMP. Alpha-D-glucose 1-phosphate is bound by residues G179, 194–195 (EK), and S212. The AMP site is built by E370 and R386. Beta-D-fructose 1,6-bisphosphate-binding positions include 419-423 (REMLR) and 429-431 (QER).

Belongs to the bacterial/plant glucose-1-phosphate adenylyltransferase family. In terms of assembly, homotetramer.

The enzyme catalyses alpha-D-glucose 1-phosphate + ATP + H(+) = ADP-alpha-D-glucose + diphosphate. It functions in the pathway glycan biosynthesis; glycogen biosynthesis. Allosterically activated by fructose-1,6-bisphosphate (F16BP) and inhibited by AMP. Involved in the biosynthesis of ADP-glucose, a building block required for the elongation reactions to produce glycogen. Catalyzes the reaction between ATP and alpha-D-glucose 1-phosphate (G1P) to produce pyrophosphate and ADP-Glc. The protein is Glucose-1-phosphate adenylyltransferase of Escherichia coli O45:K1 (strain S88 / ExPEC).